A 478-amino-acid polypeptide reads, in one-letter code: Proline--tRNA ligase (478 aa).

The protein belongs to the class-II aminoacyl-tRNA synthetase family. ProS type 3 subfamily. In terms of assembly, homodimer.

It localises to the cytoplasm. It carries out the reaction tRNA(Pro) + L-proline + ATP = L-prolyl-tRNA(Pro) + AMP + diphosphate. Catalyzes the attachment of proline to tRNA(Pro) in a two-step reaction: proline is first activated by ATP to form Pro-AMP and then transferred to the acceptor end of tRNA(Pro). The sequence is that of Proline--tRNA ligase from Clostridium botulinum (strain ATCC 19397 / Type A).